Here is a 126-residue protein sequence, read N- to C-terminus: Aspartate 1-decarboxylase (126 aa).

The Schiff-base intermediate with substrate; via pyruvic acid role is filled by Ser-25. At Ser-25 the chain carries Pyruvic acid (Ser). Thr-57 lines the substrate pocket. The Proton donor role is filled by Tyr-58. Substrate is bound at residue 73 to 75; sequence GAA.

Belongs to the PanD family. As to quaternary structure, heterooctamer of four alpha and four beta subunits. Requires pyruvate as cofactor. Post-translationally, is synthesized initially as an inactive proenzyme, which is activated by self-cleavage at a specific serine bond to produce a beta-subunit with a hydroxyl group at its C-terminus and an alpha-subunit with a pyruvoyl group at its N-terminus.

The protein resides in the cytoplasm. It catalyses the reaction L-aspartate + H(+) = beta-alanine + CO2. It functions in the pathway cofactor biosynthesis; (R)-pantothenate biosynthesis; beta-alanine from L-aspartate: step 1/1. Catalyzes the pyruvoyl-dependent decarboxylation of aspartate to produce beta-alanine. This is Aspartate 1-decarboxylase from Nitrosococcus oceani (strain ATCC 19707 / BCRC 17464 / JCM 30415 / NCIMB 11848 / C-107).